Reading from the N-terminus, the 689-residue chain is Protein CFAP20DC (689 aa).

Disordered regions lie at residues 241–263 (LKST…NRIE), 333–423 (SKES…GPSE), and 584–659 (ISTS…DLSV). Composition is skewed to polar residues over residues 251-260 (TPSGSSSGNN) and 343-359 (EESQ…SSRP). The segment covering 394–405 (SEDDFYGGDSSE) has biased composition (acidic residues). Residues 409–421 (HSIQGSRGPTTGP) show a composition bias toward polar residues. Residues 584-593 (ISTSSDDTTT) are compositionally biased toward low complexity.

This is Protein CFAP20DC from Homo sapiens (Human).